The following is a 470-amino-acid chain: Poly(A) polymerase catalytic subunit (470 aa).

Residues Asp192 and Asp194 contribute to the active site.

It belongs to the poxviridae poly(A) polymerase catalytic subunit family. Heterodimer of a large (catalytic) subunit and a small (regulatory) subunit.

The enzyme catalyses RNA(n) + ATP = RNA(n)-3'-adenine ribonucleotide + diphosphate. Its function is as follows. Polymerase that creates the 3'-poly(A) tail of mRNA's. The sequence is that of Poly(A) polymerase catalytic subunit (PAPL) from Erythrocebus patas (Red guenon).